Consider the following 632-residue polypeptide: Probable membrane transporter protein MamO (632 aa).

A helical membrane pass occupies residues 25-45 (APVSILAFLILVTFAWGAYLL). Residues 78–268 (LYYTVPPAVV…VIVSHLQDVV (191 aa)) form a protease-like region. 2 residues coordinate a divalent metal cation: His148 and His263. 7 helical membrane passes run 340 to 360 (IGGY…AAGV), 412 to 432 (LVQW…VVIG), 434 to 454 (FIGN…FALI), 513 to 533 (AVLG…GGVI), 550 to 570 (IANS…VAFI), 582 to 602 (APVT…ILGA), and 612 to 632 (VLKG…LTTV). The tract at residues 365–632 (MTMGGGVLQV…AIAIKMLTTV (268 aa)) is TSUP-like.

It in the N-terminal section; belongs to the peptidase S1C family. This sequence in the C-terminal section; belongs to the 4-toluene sulfonate uptake permease (TSUP) (TC 2.A.102) family. A metal cation is required as a cofactor. Post-translationally, subject to proteolytic cleavage by MamE.

It localises to the magnetosome membrane. Its function is as follows. Plays 2 roles; promotes magnetite nucleation/formation and activates the MamE protease. Despite its near conservation of a protease-like sequence, this is probably not a protease. Required in conjunction with MamP for proteolysis of at least MamE, itself and MamP. May transport a solute that controls MamE's protease activity. May place individual iron atoms into the magnetite lattice. One of 7 genes (mamLQBIEMO) able to induce magnetosome membrane biogenesis; coexpression of mamLQRBIEMO in a deletion of the 17 gene mamAB operon restores magnetosome vesicle formation but not magnetite biosynthesis. The polypeptide is Probable membrane transporter protein MamO (Magnetospirillum gryphiswaldense (strain DSM 6361 / JCM 21280 / NBRC 15271 / MSR-1)).